Reading from the N-terminus, the 1333-residue chain is DNA-directed RNA polymerase subunit beta' (1333 aa).

Zn(2+) contacts are provided by Cys60, Cys62, Cys75, and Cys78. Positions 535, 537, and 539 each coordinate Mg(2+). The Zn(2+) site is built by Cys901, Cys983, Cys990, and Cys993.

The protein belongs to the RNA polymerase beta' chain family. The RNAP catalytic core consists of 2 alpha, 1 beta, 1 beta' and 1 omega subunit. When a sigma factor is associated with the core the holoenzyme is formed, which can initiate transcription. The cofactor is Mg(2+). Requires Zn(2+) as cofactor.

The enzyme catalyses RNA(n) + a ribonucleoside 5'-triphosphate = RNA(n+1) + diphosphate. Its function is as follows. DNA-dependent RNA polymerase catalyzes the transcription of DNA into RNA using the four ribonucleoside triphosphates as substrates. The protein is DNA-directed RNA polymerase subunit beta' of Corynebacterium efficiens (strain DSM 44549 / YS-314 / AJ 12310 / JCM 11189 / NBRC 100395).